The chain runs to 907 residues: Aldehyde oxidoreductase (907 aa).

The 78-residue stretch at 2 to 79 (IQKVITVNGI…GAQITTIEGV (78 aa)) folds into the 2Fe-2S ferredoxin-type domain. The [2Fe-2S] cluster site is built by cysteine 40, cysteine 45, cysteine 48, cysteine 60, cysteine 100, cysteine 103, cysteine 137, and cysteine 139. Histidine 653 and glutamate 869 together coordinate Mo-molybdopterin cytosine dinucleotide.

Belongs to the xanthine dehydrogenase family. Homodimer. The cofactor is Mo-molybdopterin cytosine dinucleotide. [2Fe-2S] cluster is required as a cofactor.

The catalysed reaction is an aldehyde + A + H2O = a carboxylate + AH2 + H(+). In Megalodesulfovibrio gigas (Desulfovibrio gigas), this protein is Aldehyde oxidoreductase (mop).